An 89-amino-acid polypeptide reads, in one-letter code: Cytochrome c oxidase subunit 7A, mitochondrial (89 aa).

A mitochondrion-targeting transit peptide spans 1–31 (MMNLSRAVVRSFATTAGRRSAAVPKDQIEKG). The Mitochondrial matrix segment spans residues 32-58 (YFEIRKVQEHFQKKDGKPVFLKGSVVD). Residues 59–81 (NVLYRVTVALALVGIGGMGKLFY) form a helical membrane-spanning segment. Over 82–89 (ELSVPKKE) the chain is Mitochondrial intermembrane.

It belongs to the cytochrome c oxidase VIIa family. In terms of assembly, component of the cytochrome c oxidase (complex IV, CIV), a multisubunit enzyme composed of a catalytic core of 3 subunits and several supernumerary subunits. The complex exists as a monomer or a dimer and forms supercomplexes (SCs) in the inner mitochondrial membrane with ubiquinol-cytochrome c oxidoreductase (cytochrome b-c1 complex, complex III, CIII).

It localises to the mitochondrion inner membrane. It participates in energy metabolism; oxidative phosphorylation. In terms of biological role, component of the cytochrome c oxidase, the last enzyme in the mitochondrial electron transport chain which drives oxidative phosphorylation. The respiratory chain contains 3 multisubunit complexes succinate dehydrogenase (complex II, CII), ubiquinol-cytochrome c oxidoreductase (cytochrome b-c1 complex, complex III, CIII) and cytochrome c oxidase (complex IV, CIV), that cooperate to transfer electrons derived from NADH and succinate to molecular oxygen, creating an electrochemical gradient over the inner membrane that drives transmembrane transport and the ATP synthase. Cytochrome c oxidase is the component of the respiratory chain that catalyzes the reduction of oxygen to water. Electrons originating from reduced cytochrome c in the intermembrane space (IMS) are transferred via the dinuclear copper A center (CU(A)) of subunit 2 and heme A of subunit 1 to the active site in subunit 1, a binuclear center (BNC) formed by heme A3 and copper B (CU(B)). The BNC reduces molecular oxygen to 2 water molecules using 4 electrons from cytochrome c in the IMS and 4 protons from the mitochondrial matrix. The chain is Cytochrome c oxidase subunit 7A, mitochondrial from Drosophila melanogaster (Fruit fly).